The following is a 1220-amino-acid chain: DNA-directed RNA polymerase subunit beta' (1220 aa).

C61, C63, C76, and C79 together coordinate Zn(2+). Mg(2+) is bound by residues D450, D452, and D454. Residues Q1197–N1220 are disordered. Positions D1207–N1220 are enriched in basic and acidic residues.

Belongs to the RNA polymerase beta' chain family. In terms of assembly, the RNAP catalytic core consists of 2 alpha, 1 beta, 1 beta' and 1 omega subunit. When a sigma factor is associated with the core the holoenzyme is formed, which can initiate transcription. Mg(2+) is required as a cofactor. Requires Zn(2+) as cofactor.

The catalysed reaction is RNA(n) + a ribonucleoside 5'-triphosphate = RNA(n+1) + diphosphate. Functionally, DNA-dependent RNA polymerase catalyzes the transcription of DNA into RNA using the four ribonucleoside triphosphates as substrates. This Leuconostoc mesenteroides subsp. mesenteroides (strain ATCC 8293 / DSM 20343 / BCRC 11652 / CCM 1803 / JCM 6124 / NCDO 523 / NBRC 100496 / NCIMB 8023 / NCTC 12954 / NRRL B-1118 / 37Y) protein is DNA-directed RNA polymerase subunit beta'.